The chain runs to 239 residues: MEKQEQLYEGKAKRIYRTSLPDQYWVEYKDDATAFNGEKRAQITGKGELNNRITAIFFTMLKERGIDNHFVRLLSATEQVVRKVEIIPLEVVVRNIAAGSLAKRLGMEEGTVLPQPVVEFYYKDDALGDPLVNASHIKVLGIASESDQATLERMGLAVNEVLVPYLRERNITLVDFKLEFGKTADGEILLADEISPDTCRFWDSVTNEKLDKDRFRRDLGNVEEAYKEMLTRLGGDVHV.

Belongs to the SAICAR synthetase family.

It carries out the reaction 5-amino-1-(5-phospho-D-ribosyl)imidazole-4-carboxylate + L-aspartate + ATP = (2S)-2-[5-amino-1-(5-phospho-beta-D-ribosyl)imidazole-4-carboxamido]succinate + ADP + phosphate + 2 H(+). Its pathway is purine metabolism; IMP biosynthesis via de novo pathway; 5-amino-1-(5-phospho-D-ribosyl)imidazole-4-carboxamide from 5-amino-1-(5-phospho-D-ribosyl)imidazole-4-carboxylate: step 1/2. The chain is Phosphoribosylaminoimidazole-succinocarboxamide synthase from Brevibacillus brevis (strain 47 / JCM 6285 / NBRC 100599).